The chain runs to 492 residues: GlcNAc-binding protein A (492 aa).

Residues 1–23 form the signal peptide; the sequence is MNKSSTKTLIALSMMAVSSGVSA. One can recognise a Chitin-binding type-4 domain in the interval 24-204; that stretch reads HGYVSETNDG…AFYNVIDVKF (181 aa). The region spanning 443-484 is the Chitin-binding type-3 domain; sequence AGTKVLAEDGNVYQCKEFPYSGYCVQWTETATNFAPGVGSDW.

Belongs to the GbpA family.

It is found in the secreted. Functionally, probably interacts with GlcNAc residues. May promote attachment to both epithelial cell surfaces and chitin. In Aliivibrio fischeri (strain ATCC 700601 / ES114) (Vibrio fischeri), this protein is GlcNAc-binding protein A.